Consider the following 515-residue polypeptide: Putative cytochrome P450 CYP13A2 (515 aa).

Cys-460 contributes to the heme binding site.

This sequence belongs to the cytochrome P450 family. Heme is required as a cofactor.

In terms of biological role, cytochromes P450 are a group of heme-thiolate monooxygenases. They oxidize a variety of structurally unrelated compounds, including steroids, fatty acids, and xenobiotics. This Caenorhabditis elegans protein is Putative cytochrome P450 CYP13A2 (cyp-13A2).